A 331-amino-acid polypeptide reads, in one-letter code: Holliday junction branch migration complex subunit RuvB (331 aa).

Residues 1–186 form a large ATPase domain (RuvB-L) region; that stretch reads MAKTMMQDRL…FGIVQRLEFY (186 aa). ATP is bound by residues isoleucine 25, arginine 26, glycine 67, lysine 70, threonine 71, threonine 72, 133 to 135, arginine 176, tyrosine 186, and arginine 223; that span reads EDF. Threonine 71 lines the Mg(2+) pocket. Residues 187–257 form a small ATPAse domain (RuvB-S) region; that stretch reads NIADLTTIVS…IAGSALDMLA (71 aa). The tract at residues 260 to 331 is head domain (RuvB-H); the sequence is RRGLDHLDRR…LTQMAIDQML (72 aa). Residues arginine 296, arginine 315, and arginine 320 each coordinate DNA.

Belongs to the RuvB family. In terms of assembly, homohexamer. Forms an RuvA(8)-RuvB(12)-Holliday junction (HJ) complex. HJ DNA is sandwiched between 2 RuvA tetramers; dsDNA enters through RuvA and exits via RuvB. An RuvB hexamer assembles on each DNA strand where it exits the tetramer. Each RuvB hexamer is contacted by two RuvA subunits (via domain III) on 2 adjacent RuvB subunits; this complex drives branch migration. In the full resolvosome a probable DNA-RuvA(4)-RuvB(12)-RuvC(2) complex forms which resolves the HJ.

It localises to the cytoplasm. It catalyses the reaction ATP + H2O = ADP + phosphate + H(+). The RuvA-RuvB-RuvC complex processes Holliday junction (HJ) DNA during genetic recombination and DNA repair, while the RuvA-RuvB complex plays an important role in the rescue of blocked DNA replication forks via replication fork reversal (RFR). RuvA specifically binds to HJ cruciform DNA, conferring on it an open structure. The RuvB hexamer acts as an ATP-dependent pump, pulling dsDNA into and through the RuvAB complex. RuvB forms 2 homohexamers on either side of HJ DNA bound by 1 or 2 RuvA tetramers; 4 subunits per hexamer contact DNA at a time. Coordinated motions by a converter formed by DNA-disengaged RuvB subunits stimulates ATP hydrolysis and nucleotide exchange. Immobilization of the converter enables RuvB to convert the ATP-contained energy into a lever motion, pulling 2 nucleotides of DNA out of the RuvA tetramer per ATP hydrolyzed, thus driving DNA branch migration. The RuvB motors rotate together with the DNA substrate, which together with the progressing nucleotide cycle form the mechanistic basis for DNA recombination by continuous HJ branch migration. Branch migration allows RuvC to scan DNA until it finds its consensus sequence, where it cleaves and resolves cruciform DNA. The protein is Holliday junction branch migration complex subunit RuvB of Psychrobacter cryohalolentis (strain ATCC BAA-1226 / DSM 17306 / VKM B-2378 / K5).